We begin with the raw amino-acid sequence, 212 residues long: MKERIFNKYFPDLDKSIIKKFIKLYKIHKFFNKKINIISNNSLNFFYERHILHSLCVYKICYFLNKSIIIDVGTGGGFPGIPLALLFNKTKFILIDSIEKKIKIINLIIKELHLKNVYVKCTRIENFHNKCNFIIGRAVTKLPNFIRLVKKNFLFKKKNKINNGILYLKGGEFENEKNNQYLYIKYNIYNFLKKFFFKKKLFIFLLFNIKII.

Residues G73, F78, 124–125 (IE), and R137 contribute to the S-adenosyl-L-methionine site.

Belongs to the methyltransferase superfamily. RNA methyltransferase RsmG family.

It localises to the cytoplasm. Functionally, specifically methylates the N7 position of a guanine in 16S rRNA. This Karelsulcia muelleri (strain GWSS) (Sulcia muelleri) protein is Ribosomal RNA small subunit methyltransferase G.